The chain runs to 215 residues: dITP/XTP pyrophosphatase (215 aa).

A substrate-binding site is contributed by 13–18 (THNIGK). Residue aspartate 74 is the Proton acceptor of the active site. Residue aspartate 74 coordinates Mg(2+). Substrate is bound by residues serine 75, 163–166 (FGFD), lysine 186, and 199–200 (HR).

Belongs to the HAM1 NTPase family. In terms of assembly, homodimer. The cofactor is Mg(2+).

The catalysed reaction is XTP + H2O = XMP + diphosphate + H(+). It carries out the reaction dITP + H2O = dIMP + diphosphate + H(+). It catalyses the reaction ITP + H2O = IMP + diphosphate + H(+). Its function is as follows. Pyrophosphatase that catalyzes the hydrolysis of nucleoside triphosphates to their monophosphate derivatives, with a high preference for the non-canonical purine nucleotides XTP (xanthosine triphosphate), dITP (deoxyinosine triphosphate) and ITP. Seems to function as a house-cleaning enzyme that removes non-canonical purine nucleotides from the nucleotide pool, thus preventing their incorporation into DNA/RNA and avoiding chromosomal lesions. The protein is dITP/XTP pyrophosphatase of Bartonella henselae (strain ATCC 49882 / DSM 28221 / CCUG 30454 / Houston 1) (Rochalimaea henselae).